The following is a 267-amino-acid chain: tRNA-cytidine(32) 2-sulfurtransferase 1 (267 aa).

Positions 42-47 match the PP-loop motif motif; sequence SGGKDS. The [4Fe-4S] cluster site is built by Cys117, Cys120, and Cys208.

This sequence belongs to the TtcA family. As to quaternary structure, homodimer. Requires Mg(2+) as cofactor. [4Fe-4S] cluster serves as cofactor.

Its subcellular location is the cytoplasm. It carries out the reaction cytidine(32) in tRNA + S-sulfanyl-L-cysteinyl-[cysteine desulfurase] + AH2 + ATP = 2-thiocytidine(32) in tRNA + L-cysteinyl-[cysteine desulfurase] + A + AMP + diphosphate + H(+). It functions in the pathway tRNA modification. Its function is as follows. Catalyzes the ATP-dependent 2-thiolation of cytidine in position 32 of tRNA, to form 2-thiocytidine (s(2)C32). The sulfur atoms are provided by the cysteine/cysteine desulfurase (IscS) system. In Francisella tularensis subsp. tularensis (strain FSC 198), this protein is tRNA-cytidine(32) 2-sulfurtransferase 1.